The chain runs to 525 residues: MAHDIHAHRILILDFGSQYTQLIARRVREIGVYCELHPWDMSDEDIRAFAPRGIILAGGPESVHEANSPRAPQAVFDLNVPVLGICYGMQTMAEQLGGKVEGSDLREFGYARVDVVGKSQLLAGIEDHVDADGVFGLDVWMSHGDKVTRLPEGFHILASTPSCPIAAMSDDTRHYYGVQFHPEVTHTKQGGRILSRFVLEISGCEALWTPANIVEDAVAAVRAQVGDANVLLGLSGGVDSSVVAALLHKAIGDQLTCVFVDNGLLRLHEGDQVMAMFAENMGVKVIRANAEEQFLSNLAGESDPEKKRKIIGRTFIDVFDAEASKLDNIQFLAQGTIYPDVIESAGAKSGKAHVIKSHHNVGGLPEEMNLKLVEPLRELFKDEVRKIGLELGLPYDMVYRHPFPGPGLGVRILGEVKKEYADLLRRADHIFIEELRKADWYHKTSQAFVVFQPVKSVGVVGDGRRYAWVVALRAVETVDFMTARWAHLPYELLETVSGRIINEIEGISRVTYDVSSKPPATIEWE.

Residues 9-207 (RILILDFGSQ…VLEISGCEAL (199 aa)) enclose the Glutamine amidotransferase type-1 domain. Residue C86 is the Nucleophile of the active site. Active-site residues include H181 and E183. Residues 208 to 400 (WTPANIVEDA…LGLPYDMVYR (193 aa)) form the GMPS ATP-PPase domain. 235-241 (SGGVDSS) serves as a coordination point for ATP.

In terms of assembly, homodimer.

It catalyses the reaction XMP + L-glutamine + ATP + H2O = GMP + L-glutamate + AMP + diphosphate + 2 H(+). It participates in purine metabolism; GMP biosynthesis; GMP from XMP (L-Gln route): step 1/1. Its function is as follows. Catalyzes the synthesis of GMP from XMP. The protein is GMP synthase [glutamine-hydrolyzing] of Ectopseudomonas mendocina (strain ymp) (Pseudomonas mendocina).